Here is a 754-residue protein sequence, read N- to C-terminus: Endothelin-converting enzyme 1 (754 aa).

Topologically, residues 1 to 52 (MMSTYKRATLDEEDLVDSLSEGEVYPNGLQVNFRNFRSSQRCWATRTQVEKR) are cytoplasmic. A Phosphothreonine modification is found at Thr9. The helical; Signal-anchor for type II membrane protein transmembrane segment at 53-73 (LIVLVALLAAGLVACLTALGI) threads the bilayer. At 74-754 (QYRTRTPPVC…MNPRHKCEVW (681 aa)) the chain is on the extracellular side. Positions 82–754 (VCLSEACVSV…MNPRHKCEVW (673 aa)) constitute a Peptidase M13 domain. 5 disulfide bridges follow: Cys83–Cys88, Cys106–Cys739, Cys114–Cys699, Cys169–Cys419, and Cys628–Cys751. Residues Asn150, Asn171, Asn194, Asn254, Asn300, Asn346, Asn367, and Asn523 are each glycosylated (N-linked (GlcNAc...) asparagine). His591 contributes to the Zn(2+) binding site. Residue Glu592 is part of the active site. His595 lines the Zn(2+) pocket. 2 N-linked (GlcNAc...) asparagine glycosylation sites follow: Asn616 and Asn635. Zn(2+) is bound at residue Glu651. Asp655 (proton donor) is an active-site residue.

Belongs to the peptidase M13 family. In terms of assembly, homodimer; disulfide-linked. Interacts with PPP1R16B. Interacts with TSPAN8; this interaction recruits the endothelin converting enzyme ECE1 to tetraspanin-enriched microdomains and positively modulates its enzymatic activity. The cofactor is Zn(2+).

The protein localises to the cell membrane. The catalysed reaction is Hydrolysis of the 21-Trp-|-Val-22 bond in big endothelin to form endothelin 1.. With respect to regulation, inhibited by phosphoramidon. In terms of biological role, converts big endothelin-1 to endothelin-1. This is Endothelin-converting enzyme 1 (ECE1) from Cavia porcellus (Guinea pig).